We begin with the raw amino-acid sequence, 212 residues long: MNSRLIVTGTDTGIGKTVFSAALCHALGAAYWKPVQSGLEEETDSEIVARLAQASPQRILPEAWRLNTPASPHLSARLDGVEIRPEEMHIPATSLPLVIEGAGGLLVPLNDKTLFADLFAIWRIPAILCARAALGTINHTLLSLEAMRSRDIPVLGVAFIGEANEDTETTIAHLGRVKRLGRLPLLDDLSPEKLHHSFARNFHIDDFAGVAR.

13 to 18 (GIGKTV) contributes to the ATP binding site. Threonine 17 is a binding site for Mg(2+). The active site involves lysine 33. Serine 37 is a binding site for substrate. Glutamate 100 contributes to the Mg(2+) binding site. Residues 100–103 (EGAG) and 184–186 (PLL) each bind ATP.

It belongs to the dethiobiotin synthetase family. As to quaternary structure, homodimer. Mg(2+) is required as a cofactor.

The protein localises to the cytoplasm. The enzyme catalyses (7R,8S)-7,8-diammoniononanoate + CO2 + ATP = (4R,5S)-dethiobiotin + ADP + phosphate + 3 H(+). Its pathway is cofactor biosynthesis; biotin biosynthesis; biotin from 7,8-diaminononanoate: step 1/2. Catalyzes a mechanistically unusual reaction, the ATP-dependent insertion of CO2 between the N7 and N8 nitrogen atoms of 7,8-diaminopelargonic acid (DAPA, also called 7,8-diammoniononanoate) to form a ureido ring. The chain is ATP-dependent dethiobiotin synthetase BioD from Brucella canis (strain ATCC 23365 / NCTC 10854 / RM-666).